Here is a 358-residue protein sequence, read N- to C-terminus: Dynein axonemal assembly factor 10 (358 aa).

WD repeat units lie at residues 64 to 106 (EKSK…SPVY), 116 to 155 (NAID…TPVV), 163 to 206 (ETKR…LRWE), 208 to 250 (NIRN…PSKG), 258 to 298 (AHKS…QRSK), and 320 to 358 (LSTQ…LNTV).

In terms of assembly, interacts with PIH1D1; the interaction associates DNAAF10 with the R2TP complex. Interacts with several dynein axonemal assembly factors.

The protein localises to the dynein axonemal particle. In terms of biological role, key assembly factor specifically required for the stability of axonemal dynein heavy chains in cytoplasm. This chain is Dynein axonemal assembly factor 10 (dnaaf10), found in Danio rerio (Zebrafish).